A 366-amino-acid polypeptide reads, in one-letter code: DNA-directed RNA polymerase II subunit GRINL1A (366 aa).

Residues 1 to 23 form a disordered region; that stretch reads MFSLPRGFEPPAPEDLGRQSSAE. Residues 15–39 are a coiled coil; that stretch reads DLGRQSSAELRERLRRQERLLRNEK. Residues 29 to 68 are important for transcription repressor activity; it reads RRQERLLRNEKFICKLPDKGKKISDTVAKLKAAISEREEV. Disordered stretches follow at residues 88-140, 158-182, 201-225, and 237-280; these read ATTR…HRGN, IRAR…QEEE, ADQS…ETPK, and ARNP…RRAR. A compositionally biased stretch (basic and acidic residues) spans 90–100; that stretch reads TRADTDVDKAQ. Residues 101–127 show a composition bias toward low complexity; sequence SSDLMLDTSSLDPDCSSIDIKSSKSTS. Positions 225–296 are interaction with Pol II; that stretch reads KKPHYMKVLE…TAARLLPLHH (72 aa). Residues 251-272 are compositionally biased toward polar residues; the sequence is VLPTQQSDSPSHCQRGQSPASS. S268 is subject to Phosphoserine. The interval 297 to 312 is important for transcription repressor activity; the sequence is LPAQLLSIEESLALQR. Positions 299-333 form a coiled coil; sequence AQLLSIEESLALQREQKQNYEEMQAKLAAQKLAER. The segment at 313 to 338 is interaction with Pol II; it reads EQKQNYEEMQAKLAAQKLAERLNIKM. The tract at residues 338–366 is disordered; the sequence is MQSYNPEGESSGRYREVRDEADAQSSDEC. Positions 347–358 are enriched in basic and acidic residues; the sequence is SSGRYREVRDEA.

It belongs to the GRINL1 family. In terms of assembly, component of the Pol II(G) complex, which contains the RNA polymerase II (Pol II) core complex subunits and POLR2M isoform 1. Pol II(G) appears to be an abundant form of Pol II. In terms of processing, dephosphorylated at Ser-268 by the PNUTS-PP1 complex, promoting RNA polymerase II transcription pause-release.

Its subcellular location is the nucleus. In terms of biological role, appears to be a stable component of the Pol II(G) complex form of RNA polymerase II (Pol II). Pol II synthesizes mRNA precursors and many functional non-coding RNAs and is the central component of the basal RNA polymerase II transcription machinery. May play a role in the Mediator complex-dependent regulation of transcription activation. Acts as a negative regulator of transcriptional activation; this repression is relieved by the Mediator complex, which restores Pol II(G) activator-dependent transcription to a level equivalent to that of Pol II. The protein is DNA-directed RNA polymerase II subunit GRINL1A (Polr2m) of Mus musculus (Mouse).